Reading from the N-terminus, the 61-residue chain is Large ribosomal subunit protein uL30 (61 aa).

It belongs to the universal ribosomal protein uL30 family. In terms of assembly, part of the 50S ribosomal subunit.

In Treponema denticola (strain ATCC 35405 / DSM 14222 / CIP 103919 / JCM 8153 / KCTC 15104), this protein is Large ribosomal subunit protein uL30.